The primary structure comprises 828 residues: Protein ELFN1 (828 aa).

The signal sequence occupies residues 1-25 (MAGHGWGTAWVLVAAATLLHAGGLA). At 26–418 (QGDCWLIEGD…VPSPSTATHY (393 aa)) the chain is on the extracellular side. LRR repeat units follow at residues 61 to 82 (TIVD…SLSR), 85 to 106 (NLTY…AFSG), 109 to 130 (NLQV…MLRG), 133 to 154 (KLEY…AFWE), and 157 to 178 (NIVN…TFAG). N-linked (GlcNAc...) asparagine glycans are attached at residues N85, N90, and N122. The LRRCT domain maps to 190–253 (NPFYCSCELL…LSKLQSVCTE (64 aa)). N210 carries an N-linked (GlcNAc...) asparagine glycan. The tract at residues 258-293 (AEVLGPPRPVPGRSQPGHSPPPPPPEPSDMPCADDE) is disordered. Residues 275–285 (HSPPPPPPEPS) show a composition bias toward pro residues. The Fibronectin type-III domain occupies 312–399 (QTEARPSMKV…HNHTCLTICL (88 aa)). An N-linked (GlcNAc...) asparagine glycan is attached at N376. The helical transmembrane segment at 419 to 439 (IMTILGCLFGMVLVLGAVYYC) threads the bilayer. The Cytoplasmic portion of the chain corresponds to 440–828 (LRKRRRQEEK…WKGVSAQHKS (389 aa)). S460 and S646 each carry phosphoserine. Disordered regions lie at residues 627 to 674 (HHSV…IEKS) and 697 to 731 (KSRQ…GLGG). Positions 638 to 652 (RASTSSSGSARSPRT) are enriched in low complexity. Residues 697 to 706 (KSRQYGEHRH) show a composition bias toward basic and acidic residues. Pro residues predominate over residues 714 to 725 (AEPPAPPPPPPT).

In terms of assembly, interacts with PPP1CA. Selectively expressed in perialvear somatostatin (Sst)-containing interneurons.

The protein localises to the membrane. Its subcellular location is the cell projection. The protein resides in the dendrite. Its function is as follows. Postsynaptic protein that regulates circuit dynamics in the central nervous system by modulating the temporal dynamics of interneuron recruitment. Specifically present in excitatory synapses onto oriens-lacunosum molecular (OLM) interneurons and acts as a regulator of presynaptic release probability to direct the formation of highly facilitating pyramidal-OLM synapses. Inhibits phosphatase activity of protein phosphatase 1 (PP1) complexes. The polypeptide is Protein ELFN1 (Elfn1) (Mus musculus (Mouse)).